The following is a 143-amino-acid chain: UPF0763 protein HH_0976 (143 aa).

It belongs to the UPF0763 family.

This Helicobacter hepaticus (strain ATCC 51449 / 3B1) protein is UPF0763 protein HH_0976.